A 446-amino-acid chain; its full sequence is ATP-dependent protease ATPase subunit HslU (446 aa).

ATP is bound by residues Ile-17, Gly-59–Glu-64, Asp-255, Glu-320, and Arg-392.

The protein belongs to the ClpX chaperone family. HslU subfamily. A double ring-shaped homohexamer of HslV is capped on each side by a ring-shaped HslU homohexamer. The assembly of the HslU/HslV complex is dependent on binding of ATP.

It localises to the cytoplasm. Its function is as follows. ATPase subunit of a proteasome-like degradation complex; this subunit has chaperone activity. The binding of ATP and its subsequent hydrolysis by HslU are essential for unfolding of protein substrates subsequently hydrolyzed by HslV. HslU recognizes the N-terminal part of its protein substrates and unfolds these before they are guided to HslV for hydrolysis. In Pseudomonas fluorescens (strain ATCC BAA-477 / NRRL B-23932 / Pf-5), this protein is ATP-dependent protease ATPase subunit HslU.